A 539-amino-acid polypeptide reads, in one-letter code: ATP synthase subunit beta (539 aa).

The segment at 1–44 is disordered; that stretch reads MAKTPAEKPATAAKKPAAPKAAAAPKAAAAKAPAAAKAPAAKKP. 212-219 provides a ligand contact to ATP; it reads GGAGVGKT.

This sequence belongs to the ATPase alpha/beta chains family. F-type ATPases have 2 components, CF(1) - the catalytic core - and CF(0) - the membrane proton channel. CF(1) has five subunits: alpha(3), beta(3), gamma(1), delta(1), epsilon(1). CF(0) has three main subunits: a(1), b(2) and c(9-12). The alpha and beta chains form an alternating ring which encloses part of the gamma chain. CF(1) is attached to CF(0) by a central stalk formed by the gamma and epsilon chains, while a peripheral stalk is formed by the delta and b chains.

The protein localises to the cell inner membrane. It carries out the reaction ATP + H2O + 4 H(+)(in) = ADP + phosphate + 5 H(+)(out). Its function is as follows. Produces ATP from ADP in the presence of a proton gradient across the membrane. The catalytic sites are hosted primarily by the beta subunits. The chain is ATP synthase subunit beta from Caulobacter vibrioides (strain ATCC 19089 / CIP 103742 / CB 15) (Caulobacter crescentus).